The following is a 415-amino-acid chain: Histidine--tRNA ligase (415 aa).

The protein belongs to the class-II aminoacyl-tRNA synthetase family. Homodimer.

It is found in the cytoplasm. It carries out the reaction tRNA(His) + L-histidine + ATP = L-histidyl-tRNA(His) + AMP + diphosphate + H(+). In Clostridium botulinum (strain Langeland / NCTC 10281 / Type F), this protein is Histidine--tRNA ligase.